Consider the following 380-residue polypeptide: Flap endonuclease 1 (380 aa).

Positions 1–105 are N-domain; it reads MGIKGLAQVL…GELAKRVARH (105 aa). Position 34 (Asp34) interacts with Mg(2+). 2 residues coordinate DNA: Arg47 and Arg71. Residues Asp87, Glu159, Glu161, Asp180, and Asp182 each contribute to the Mg(2+) site. Residues 123–254 are I-domain; it reads MVDRFAKRTV…ARAVELIRQY (132 aa). Residue Glu159 coordinates DNA. Positions 232 and 234 each coordinate DNA. A Mg(2+)-binding site is contributed by Asp234. Residues 337–345 are interaction with PCNA; that stretch reads PQGRLDSFF. Residues 340–380 form a disordered region; it reads RLDSFFKPVPSSPKKPVDTKSKGSAKRKRDSNKGGESKKKR. The span at 342–353 shows a compositional bias: low complexity; that stretch reads DSFFKPVPSSPK. Residues Ser350 and Ser351 each carry the phosphoserine modification. Residues 370-380 show a composition bias toward basic and acidic residues; the sequence is SNKGGESKKKR.

The protein belongs to the XPG/RAD2 endonuclease family. FEN1 subfamily. In terms of assembly, interacts with PCNA. Three molecules of rad2 bind to one PCNA trimer with each molecule binding to one PCNA monomer. PCNA stimulates the nuclease activity without altering cleavage specificity. It depends on Mg(2+) as a cofactor. Phosphorylated. Phosphorylation upon DNA damage induces relocalization to the nuclear plasma.

It localises to the nucleus. The protein localises to the nucleolus. The protein resides in the nucleoplasm. Its subcellular location is the mitochondrion. In terms of biological role, structure-specific nuclease with 5'-flap endonuclease and 5'-3' exonuclease activities involved in DNA replication and repair. During DNA replication, cleaves the 5'-overhanging flap structure that is generated by displacement synthesis when DNA polymerase encounters the 5'-end of a downstream Okazaki fragment. It enters the flap from the 5'-end and then tracks to cleave the flap base, leaving a nick for ligation. Also involved in the long patch base excision repair (LP-BER) pathway, by cleaving within the apurinic/apyrimidinic (AP) site-terminated flap. Acts as a genome stabilization factor that prevents flaps from equilibrating into structures that lead to duplications and deletions. Also possesses 5'-3' exonuclease activity on nicked or gapped double-stranded DNA, and exhibits RNase H activity. Also involved in replication and repair of rDNA and in repairing mitochondrial DNA. The protein is Flap endonuclease 1 of Schizosaccharomyces pombe (strain 972 / ATCC 24843) (Fission yeast).